Consider the following 354-residue polypeptide: MAQASNSRIKVGIVGGTGYTGVELLRLLSQHPHVALTAITSRKEDGLPVADMYPNLRGRVKLAFSAPEKASLTDCDVVFFATPHGVAMAQAAELLAAGTRVIDLAADFRLQDTAVFERWYKIPHTCPDILADSVYGLVELNREAISKARVIGNPGCYPTTVLLGLAPLIEGGKQLVDVQTLIADCKSGVSGAGRKAEVGSLFSEASDNFKAYGVAGHRHQPEIVAQLEKLAGGKVGLTFVPHLVPMIRGMFSTLYARILPQARDTDFQALFEARYADEPFVDVMPAGSLPETRSVRASNNLRISVQRPGGGDQLVILVVQDNLVKGASGQAVQNMNLMFGLPESAGLDQVAILP.

The active site involves cysteine 156.

This sequence belongs to the NAGSA dehydrogenase family. Type 1 subfamily.

It is found in the cytoplasm. The catalysed reaction is N-acetyl-L-glutamate 5-semialdehyde + phosphate + NADP(+) = N-acetyl-L-glutamyl 5-phosphate + NADPH + H(+). It functions in the pathway amino-acid biosynthesis; L-arginine biosynthesis; N(2)-acetyl-L-ornithine from L-glutamate: step 3/4. Its function is as follows. Catalyzes the NADPH-dependent reduction of N-acetyl-5-glutamyl phosphate to yield N-acetyl-L-glutamate 5-semialdehyde. The sequence is that of N-acetyl-gamma-glutamyl-phosphate reductase from Bordetella bronchiseptica (strain ATCC BAA-588 / NCTC 13252 / RB50) (Alcaligenes bronchisepticus).